A 360-amino-acid polypeptide reads, in one-letter code: Phospho-N-acetylmuramoyl-pentapeptide-transferase (360 aa).

Helical transmembrane passes span 26 to 46, 72 to 92, 94 to 114, 132 to 152, 168 to 188, 199 to 219, 236 to 256, 263 to 283, 288 to 308, and 338 to 358; these read AIVS…RMIA, PTMG…LWAY, SNPY…IGFV, WKYF…YLAG, VMPQ…VGTG, GLAI…AWAT, AGEL…FLWF, VFMG…IAVL, FLLV…ILQV, and VIVR…ATLK.

This sequence belongs to the glycosyltransferase 4 family. MraY subfamily. Mg(2+) serves as cofactor.

The protein localises to the cell inner membrane. The enzyme catalyses UDP-N-acetyl-alpha-D-muramoyl-L-alanyl-gamma-D-glutamyl-meso-2,6-diaminopimeloyl-D-alanyl-D-alanine + di-trans,octa-cis-undecaprenyl phosphate = di-trans,octa-cis-undecaprenyl diphospho-N-acetyl-alpha-D-muramoyl-L-alanyl-D-glutamyl-meso-2,6-diaminopimeloyl-D-alanyl-D-alanine + UMP. It functions in the pathway cell wall biogenesis; peptidoglycan biosynthesis. Catalyzes the initial step of the lipid cycle reactions in the biosynthesis of the cell wall peptidoglycan: transfers peptidoglycan precursor phospho-MurNAc-pentapeptide from UDP-MurNAc-pentapeptide onto the lipid carrier undecaprenyl phosphate, yielding undecaprenyl-pyrophosphoryl-MurNAc-pentapeptide, known as lipid I. The sequence is that of Phospho-N-acetylmuramoyl-pentapeptide-transferase from Enterobacter sp. (strain 638).